A 434-amino-acid chain; its full sequence is MKKLKSYYMQVRNQQQSLDRKWILPLAIGSICSLFLLLLTNLASSSGQTRLIPFSVYGFRSSVFVESKINPVSVSLTVSVSPPPPPRLAYLISGSSGDGQMLKRTLMALYHPNNQYVVHLDRESSPEERLDLSGFVANHTLFQRFQNVRMIVKANFVTYRGPTMVANTLHAAAILLREGGDWDWFINLSASDYPLVTQDDLLHTFSYLPRDLNFIDHTSNIGWKESHRAKPIIIDPGLYMSKKADVFWVSQKRSMPTAFKLFTGSAWMMLSRPFVDYFIWGWDNLPRIVLMYYANFLSSPEGYFHTVICNAREFTNTTVNSDLHFISWDNPPKQHPHHLTLDDFQRMVDSNAPFARKFRRDEPVLDKIDSELLFRSHGMVTPGGWCIGTRENGSDPCAVIGDTSVIKPGLGAKRIEKLITYLLSTENFRPRQCR.

Residues 1 to 21 are Cytoplasmic-facing; the sequence is MKKLKSYYMQVRNQQQSLDRK. Residues 22 to 42 form a signal-anchor for type II membrane protein membrane-spanning segment; that stretch reads WILPLAIGSICSLFLLLLTNL. At 43–434 the chain is on the lumenal side; it reads ASSSGQTRLI…TENFRPRQCR (392 aa). Asparagine 138, asparagine 187, asparagine 316, and asparagine 392 each carry an N-linked (GlcNAc...) asparagine glycan.

The protein belongs to the glycosyltransferase 14 family.

It is found in the golgi apparatus membrane. Beta-glucuronosyltransferase involved in the biosynthesis of type II arabinogalactan (AG). Modifies both the beta-1,6-linked galactan and beta-1,3-linked galactan present in type II AG. The protein is Beta-glucuronosyltransferase GlcAT14B of Arabidopsis thaliana (Mouse-ear cress).